The primary structure comprises 640 residues: uncharacterized protein (640 aa).

Residues Val-184–Ile-328 form the TIR domain. The segment at Leu-613–Glu-640 is disordered. A compositionally biased stretch (acidic residues) spans Asp-616–Asp-626.

This is an uncharacterized protein from Sinorhizobium fredii (strain NBRC 101917 / NGR234).